Here is a 515-residue protein sequence, read N- to C-terminus: 1-pyrroline-5-carboxylate dehydrogenase (515 aa).

Active-site residues include glutamate 286 and cysteine 320.

The protein belongs to the aldehyde dehydrogenase family. RocA subfamily.

The catalysed reaction is L-glutamate 5-semialdehyde + NAD(+) + H2O = L-glutamate + NADH + 2 H(+). It functions in the pathway amino-acid degradation; L-proline degradation into L-glutamate; L-glutamate from L-proline: step 2/2. The polypeptide is 1-pyrroline-5-carboxylate dehydrogenase (Bacillus anthracis (strain A0248)).